The following is a 445-amino-acid chain: Phosphoglucosamine mutase (445 aa).

Ser105 serves as the catalytic Phosphoserine intermediate. Mg(2+) is bound by residues Ser105, Asp244, Asp246, and Asp248. Ser105 is modified (phosphoserine).

This sequence belongs to the phosphohexose mutase family. It depends on Mg(2+) as a cofactor. In terms of processing, activated by phosphorylation.

It carries out the reaction alpha-D-glucosamine 1-phosphate = D-glucosamine 6-phosphate. Catalyzes the conversion of glucosamine-6-phosphate to glucosamine-1-phosphate. This Janthinobacterium sp. (strain Marseille) (Minibacterium massiliensis) protein is Phosphoglucosamine mutase.